The primary structure comprises 231 residues: Large ribosomal subunit protein uL1 (231 aa).

Belongs to the universal ribosomal protein uL1 family. In terms of assembly, part of the 50S ribosomal subunit.

Functionally, binds directly to 23S rRNA. The L1 stalk is quite mobile in the ribosome, and is involved in E site tRNA release. Its function is as follows. Protein L1 is also a translational repressor protein, it controls the translation of the L11 operon by binding to its mRNA. This Caldanaerobacter subterraneus subsp. tengcongensis (strain DSM 15242 / JCM 11007 / NBRC 100824 / MB4) (Thermoanaerobacter tengcongensis) protein is Large ribosomal subunit protein uL1.